The chain runs to 180 residues: Oligoribonuclease (180 aa).

In terms of domain architecture, Exonuclease spans 7–170 (LIWIDLEMTG…DDIRESIAEL (164 aa)). Tyrosine 128 is a catalytic residue.

This sequence belongs to the oligoribonuclease family.

It is found in the cytoplasm. 3'-to-5' exoribonuclease specific for small oligoribonucleotides. This chain is Oligoribonuclease, found in Pseudomonas fluorescens (strain Pf0-1).